Here is a 179-residue protein sequence, read N- to C-terminus: Signal peptidase complex catalytic subunit SEC11A (179 aa).

At 1 to 16 the chain is on the cytoplasmic side; that stretch reads MLSLDFLDDVRRMNKR. The chain crosses the membrane as a helical; Signal-anchor for type II membrane protein span at residues 17 to 36; the sequence is QLYYQVLNFGMIVSSALMIW. Residues 37 to 179 lie on the Lumenal side of the membrane; that stretch reads KGLMVITGSE…LGLFVLVHRE (143 aa). Active-site charge relay system residues include Ser56, His96, and Asp122. The segment at 165 to 176 is C-terminal short (CTS) helix; it reads AVLFLLGLFVLV.

This sequence belongs to the peptidase S26B family. Component of the signal peptidase complex paralog A (SPC-A) composed of a catalytic subunit SEC11A and three accessory subunits SPCS1, SPCS2 and SPCS3. Within the complex, interacts with SPCS2 and SPCS3. The complex induces a local thinning of the ER membrane which is used to measure the length of the signal peptide (SP) h-region of protein substrates. This ensures the selectivity of the complex towards h-regions shorter than 18-20 amino acids.

It localises to the endoplasmic reticulum membrane. It carries out the reaction Cleavage of hydrophobic, N-terminal signal or leader sequences from secreted and periplasmic proteins.. Functionally, catalytic component of the signal peptidase complex (SPC) which catalyzes the cleavage of N-terminal signal sequences from nascent proteins as they are translocated into the lumen of the endoplasmic reticulum. Specifically cleaves N-terminal signal peptides that contain a hydrophobic alpha-helix (h-region) shorter than 18-20 amino acids. This is Signal peptidase complex catalytic subunit SEC11A (SEC11A) from Bos taurus (Bovine).